Consider the following 218-residue polypeptide: Esterase FPY3 (218 aa).

Active-site charge relay system residues include S95, D163, and H190.

This sequence belongs to the LovG family.

It participates in secondary metabolite biosynthesis. Functionally, esterase; part of the gene cluster that mediates the biosynthesis of the gamma-pyrones fusapyrone (FPY) and deoxyfusapyrone (dFPY). FPY is an undecaketide and thus likely synthesized by the polyketide synthase FPY1 from acetyl-CoA functioning as starter unit and the addition of 10 malonyl-CoA extender units by successive Claisen-condensations. Next to this, FPY shares some rare features: C-glycosylated 4-deoxyglucose at C-3, a gem-dimethyl group at C-13, and an alpha-beta to beta-gamma double bond shift at C-20. During FPY biosynthesis mono-C-methyl groups are transferred to the tetra-, penta-, hexa- and heptaketide, while two C-methyl groups are transferred to the nonaketide, suggesting that the CMet domain is programmed to selectively catalyze two successive C-alpha-methylation reactions of the nonaketide, while other alpha-carbons are non- or mono-methylated only. While the origin of the 4'-deoxyglucose moiety remains opaque, its transfer to C-3 is most likely mediated by the C-glycosyltransferase FPY2. Next to this, the hydroxyl group present at C-33 and discriminating between FPY and dFPY, is likely to be installed by the cytochrome P450 monooxygenase FPY7. No putative function can be predicted for the remaining genes FPY3-FPY6. The sequence is that of Esterase FPY3 from Fusarium mangiferae (Mango malformation disease fungus).